We begin with the raw amino-acid sequence, 597 residues long: MKNIRNFSIIAHIDHGKSTLADRFIQYCGGLDLREMSTQVLDSMDIEKERGITIKAQTAALNYKARDGQVYQLNLIDTPGHVDFSYEVSRSLSACEGALLVVDASQGVEAQTVANCYTAIDLGVEVVPVLNKIDLPAADPERVEQEIEDIIGIDAVGAVQCSAKSGIGVEDVLEEIVAKIPAPTGDENAPLQAVIVDSWFDNYVGVVMLIRVKNGTIKLKDKVRFMSTKAETQVEQLGVFTPKSVQKQELKAGEVGFLITGVKELGQAKVGDTVTLVANPATEPLPGFQEVQSQVFAGLYPVESHDYEALRDALEKLQLNDASLKFEPEVSQALGFGFRCGFLGLLHLEIVQERLEREFDMDLITTAPTVVYEVVLKSGEKIEVENPSKLPDIGSIETILEPIITATILVPQEYVGNVMTLCNQKRGVQVNMQYMGRQVMLTYDLPMNEVVMDFFDKLKSTSRGYASLDYHFKEFQPSDLIKLDIMVNGEKVDALSLIVHRQSAVHRGRELASKMRELIPRQMFDIAVQAAIGSQIIARENVKALRKNVLAKCYGGDITRKKKLLEKQKAGKRRMKQVGNVEIPQSAFLAILQVSDK.

Residues 2 to 184 form the tr-type G domain; that stretch reads KNIRNFSIIA…EIVAKIPAPT (183 aa). GTP is bound by residues 14–19 and 131–134; these read DHGKST and NKID.

The protein belongs to the TRAFAC class translation factor GTPase superfamily. Classic translation factor GTPase family. LepA subfamily.

It localises to the cell inner membrane. It carries out the reaction GTP + H2O = GDP + phosphate + H(+). Required for accurate and efficient protein synthesis under certain stress conditions. May act as a fidelity factor of the translation reaction, by catalyzing a one-codon backward translocation of tRNAs on improperly translocated ribosomes. Back-translocation proceeds from a post-translocation (POST) complex to a pre-translocation (PRE) complex, thus giving elongation factor G a second chance to translocate the tRNAs correctly. Binds to ribosomes in a GTP-dependent manner. This is Elongation factor 4 from Neisseria meningitidis serogroup C / serotype 2a (strain ATCC 700532 / DSM 15464 / FAM18).